The sequence spans 303 residues: Acetyl-coenzyme A carboxylase carboxyl transferase subunit beta (303 aa).

The CoA carboxyltransferase N-terminal domain occupies leucine 29–alanine 298.

It belongs to the AccD/PCCB family. In terms of assembly, acetyl-CoA carboxylase is a heterohexamer composed of biotin carboxyl carrier protein (AccB), biotin carboxylase (AccC) and two subunits each of ACCase subunit alpha (AccA) and ACCase subunit beta (AccD).

It is found in the cytoplasm. It carries out the reaction N(6)-carboxybiotinyl-L-lysyl-[protein] + acetyl-CoA = N(6)-biotinyl-L-lysyl-[protein] + malonyl-CoA. It functions in the pathway lipid metabolism; malonyl-CoA biosynthesis; malonyl-CoA from acetyl-CoA: step 1/1. In terms of biological role, component of the acetyl coenzyme A carboxylase (ACC) complex. Biotin carboxylase (BC) catalyzes the carboxylation of biotin on its carrier protein (BCCP) and then the CO(2) group is transferred by the transcarboxylase to acetyl-CoA to form malonyl-CoA. In Methylobacterium sp. (strain 4-46), this protein is Acetyl-coenzyme A carboxylase carboxyl transferase subunit beta.